The chain runs to 148 residues: MAVKIKLARIGKIREPHYRIVVADARTRRNGRAIETIGQYHPMEEPSRIEVDSERAQYWLGVGAQPTEPVQNILEITGDWQKFKGLPGAEGTLKTAAPKPSKQELFEAALAAAGEEPVAEATTPKKKGGKKAEAEDKAEEQKSEEGQA.

Residues 111 to 122 (AAAGEEPVAEAT) show a composition bias toward low complexity. The tract at residues 111–148 (AAAGEEPVAEATTPKKKGGKKAEAEDKAEEQKSEEGQA) is disordered. Residues 130–148 (KKAEAEDKAEEQKSEEGQA) are compositionally biased toward basic and acidic residues.

It belongs to the bacterial ribosomal protein bS16 family.

The polypeptide is Small ribosomal subunit protein bS16 (Saccharopolyspora erythraea (strain ATCC 11635 / DSM 40517 / JCM 4748 / NBRC 13426 / NCIMB 8594 / NRRL 2338)).